The sequence spans 530 residues: Ubiquitin carboxyl-terminal hydrolase 17-like protein 22 (530 aa).

Positions 80–375 constitute a USP domain; sequence AGLQNMGNTC…QAYVLFYIQK (296 aa). Catalysis depends on C89, which acts as the Nucleophile. The Proton acceptor role is filled by H334. Composition is skewed to basic and acidic residues over residues 382–392 and 398–412; these read SESVSRGREPR and DTDR…KRDH. Disordered stretches follow at residues 382 to 412 and 476 to 530; these read SESV…KRDH and KNHH…LVCQ. Residues 484–495 show a composition bias toward low complexity; the sequence is SSLLKLSSTTPT. Residues 496–505 show a composition bias toward polar residues; that stretch reads HQESMNTGTL. Residues 510–524 show a composition bias toward basic residues; it reads GRARRSKGKNKHSKR.

The protein belongs to the peptidase C19 family. USP17 subfamily.

It is found in the nucleus. The protein resides in the endoplasmic reticulum. It carries out the reaction Thiol-dependent hydrolysis of ester, thioester, amide, peptide and isopeptide bonds formed by the C-terminal Gly of ubiquitin (a 76-residue protein attached to proteins as an intracellular targeting signal).. Its function is as follows. Deubiquitinating enzyme that removes conjugated ubiquitin from specific proteins to regulate different cellular processes that may include cell proliferation, progression through the cell cycle, apoptosis, cell migration, and the cellular response to viral infection. This chain is Ubiquitin carboxyl-terminal hydrolase 17-like protein 22 (USP17L22), found in Homo sapiens (Human).